We begin with the raw amino-acid sequence, 64 residues long: Large ribosomal subunit protein uL29 (64 aa).

This sequence belongs to the universal ribosomal protein uL29 family.

In Cupriavidus metallidurans (strain ATCC 43123 / DSM 2839 / NBRC 102507 / CH34) (Ralstonia metallidurans), this protein is Large ribosomal subunit protein uL29.